A 1207-amino-acid chain; its full sequence is Putative coatomer subunit alpha (1207 aa).

8 WD repeats span residues 9-50, 51-90, 93-134, 135-174, 210-249, 254-293, 296-336, and 370-411; these read SRSS…DRFD, GHDGPVRGIAFHPTQPLFVSGGDDYKVNVWNYKSRKLLFS, GHMD…AILT, GHSHYVMCAAFHPSEDLIVSASLDQTVRVWDISGLRMKNA, GHDRGVNWCAFHPTLPLILSAGDDRLVKLWRMTASKAWEV, GHFNNVSCCLFHPHQELILSASEDKTIRVWDLNRRTAVQT, RDND…HALN, and SAWL…NSLP. Phosphoserine is present on residues serine 409 and serine 942.

In terms of assembly, oligomeric complex that consists of at least the alpha, beta, beta', gamma, delta, epsilon and zeta subunits.

The protein resides in the cytoplasm. It localises to the golgi apparatus membrane. The coatomer is a cytosolic protein complex that binds to dilysine motifs and reversibly associates with Golgi non-clathrin-coated vesicles, which further mediate biosynthetic protein transport from the ER, via the Golgi up to the trans Golgi network. Coatomer complex is required for budding from Golgi membranes, and is essential for the retrograde Golgi-to-ER transport of dilysine-tagged proteins. The sequence is that of Putative coatomer subunit alpha from Schizosaccharomyces pombe (strain 972 / ATCC 24843) (Fission yeast).